A 601-amino-acid chain; its full sequence is Putative helicase 7 (601 aa).

Residues 17-182 enclose the Helicase ATP-binding domain; sequence QSFLMSDKNL…IIDAEIIKTD (166 aa). ATP is bound at residue 30–37; it reads APTGTGKS. A DEAH box motif is present at residues 129-132; the sequence is DEIH. One can recognise a Helicase C-terminal domain in the interval 208–375; that stretch reads LKEDFIKKMV…VLEDFLLALI (168 aa).

The polypeptide is Putative helicase 7 (SIFV0007) (Saccharolobus islandicus (Sulfolobus islandicus)).